The sequence spans 200 residues: Shikimate kinase (200 aa).

ATP is bound at residue 41–46 (GVGKSS). Serine 45 lines the Mg(2+) pocket. Residues aspartate 63, arginine 87, and glycine 109 each coordinate substrate. Arginine 147 contributes to the ATP binding site. Residue arginine 166 coordinates substrate.

This sequence belongs to the shikimate kinase family. In terms of assembly, monomer. Mg(2+) serves as cofactor.

Its subcellular location is the cytoplasm. It catalyses the reaction shikimate + ATP = 3-phosphoshikimate + ADP + H(+). The protein operates within metabolic intermediate biosynthesis; chorismate biosynthesis; chorismate from D-erythrose 4-phosphate and phosphoenolpyruvate: step 5/7. Functionally, catalyzes the specific phosphorylation of the 3-hydroxyl group of shikimic acid using ATP as a cosubstrate. The protein is Shikimate kinase of Caulobacter vibrioides (strain NA1000 / CB15N) (Caulobacter crescentus).